Reading from the N-terminus, the 173-residue chain is RNA pyrophosphohydrolase (173 aa).

A Nudix hydrolase domain is found at 6–149 (GFRANVGIII…KRDVYRKVMK (144 aa)). The Nudix box signature appears at 38 to 59 (GGVDDGESAEEAMYRELYEEVG).

The protein belongs to the Nudix hydrolase family. RppH subfamily. Requires a divalent metal cation as cofactor.

Accelerates the degradation of transcripts by removing pyrophosphate from the 5'-end of triphosphorylated RNA, leading to a more labile monophosphorylated state that can stimulate subsequent ribonuclease cleavage. In Shewanella pealeana (strain ATCC 700345 / ANG-SQ1), this protein is RNA pyrophosphohydrolase.